We begin with the raw amino-acid sequence, 144 residues long: Bacilliredoxin SH1478 (144 aa).

Belongs to the bacilliredoxin family.

In Staphylococcus haemolyticus (strain JCSC1435), this protein is Bacilliredoxin SH1478.